Consider the following 368-residue polypeptide: Methionine import ATP-binding protein MetN (368 aa).

Positions 5-260 constitute an ABC transporter domain; it reads IELNNLSVQF…PKEALTKQFI (256 aa). 41 to 48 provides a ligand contact to ATP; that stretch reads GYSGAGKS.

It belongs to the ABC transporter superfamily. Methionine importer (TC 3.A.1.24) family. The complex is composed of two ATP-binding proteins (MetN), two transmembrane proteins (MetI) and a solute-binding protein (MetQ).

Its subcellular location is the cell membrane. It catalyses the reaction L-methionine(out) + ATP + H2O = L-methionine(in) + ADP + phosphate + H(+). It carries out the reaction D-methionine(out) + ATP + H2O = D-methionine(in) + ADP + phosphate + H(+). Its function is as follows. Part of the ABC transporter complex MetNIQ involved in methionine import. Responsible for energy coupling to the transport system. The chain is Methionine import ATP-binding protein MetN from Lactococcus lactis subsp. cremoris (strain SK11).